The chain runs to 238 residues: Phosphoribosylaminoimidazole-succinocarboxamide synthase (238 aa).

This sequence belongs to the SAICAR synthetase family.

The enzyme catalyses 5-amino-1-(5-phospho-D-ribosyl)imidazole-4-carboxylate + L-aspartate + ATP = (2S)-2-[5-amino-1-(5-phospho-beta-D-ribosyl)imidazole-4-carboxamido]succinate + ADP + phosphate + 2 H(+). Its pathway is purine metabolism; IMP biosynthesis via de novo pathway; 5-amino-1-(5-phospho-D-ribosyl)imidazole-4-carboxamide from 5-amino-1-(5-phospho-D-ribosyl)imidazole-4-carboxylate: step 1/2. This Nitrosococcus oceani (strain ATCC 19707 / BCRC 17464 / JCM 30415 / NCIMB 11848 / C-107) protein is Phosphoribosylaminoimidazole-succinocarboxamide synthase.